The chain runs to 328 residues: D-cysteine desulfhydrase (328 aa).

Lys-51 carries the N6-(pyridoxal phosphate)lysine modification.

It belongs to the ACC deaminase/D-cysteine desulfhydrase family. As to quaternary structure, homodimer. Pyridoxal 5'-phosphate is required as a cofactor.

The enzyme catalyses D-cysteine + H2O = hydrogen sulfide + pyruvate + NH4(+) + H(+). Functionally, catalyzes the alpha,beta-elimination reaction of D-cysteine and of several D-cysteine derivatives. It could be a defense mechanism against D-cysteine. This chain is D-cysteine desulfhydrase, found in Klebsiella pneumoniae (strain 342).